The sequence spans 670 residues: MSKAFTLNSDFKPAGDQPEAIRRLKEGLEDGLAHQTLLGVTGSGKTFTIANVIADLNRPTMMLAPNKTLAAQLYGEMKEFFPENAVEYFVSYYDYYQPEAYVPSSDTFIEKDASVNEHIEQMRLSATKALLERRDVIVVASVSAIYGLGDPDLYLKMMLHLTQGMLIDQRAILRRLAELQYARNDQAFQRGTFRVRGEVIDIFPAESDEIALRVELFDEEVERLSLFDPLTGHVLQTVPRYTIYPKTHYVTPRERILQAMEDIKVELADRKKVLLANDKLVEEQRLSQRTQFDLEMMNELGYCSGIENYSRYLSGRGPGEPPPTLFDYLPADGLLVIDESHVTVPQIGGMYRGDRARKETLVEYGFRLPSALDNRPMKFEEFEALAPQTIYVSATPSHYELEKSGGDVIDQVVRPTGLLDPIIEVRPVGTQVDDLLSEIRLRAAINERVLVTTLTKRMAEDLTEYLQEHGERVRYLHSDIDTVERVEIIRDLRLGEFDVLVGINLLREGLDMPEVSLVAILDADKEGFLRSERSLIQTIGRAARNLRGKAILYGDRITASMAKAISETERRREKQEAYNTEHGIVPQGINKKISDILQLGQSANKGKGRGNRKAAEPAARYELMTPKALELKIRELESKMLTHAQNLEFEEAAALRDEVQVLRAQFIAIS.

The Helicase ATP-binding domain occupies Glu26–Arg414. Gly39–Thr46 is an ATP binding site. A Beta-hairpin motif is present at residues Tyr92–Val115. Residues Gln431–Leu597 form the Helicase C-terminal domain. The UVR domain occupies Glu630–Gln665.

This sequence belongs to the UvrB family. In terms of assembly, forms a heterotetramer with UvrA during the search for lesions. Interacts with UvrC in an incision complex.

It is found in the cytoplasm. Functionally, the UvrABC repair system catalyzes the recognition and processing of DNA lesions. A damage recognition complex composed of 2 UvrA and 2 UvrB subunits scans DNA for abnormalities. Upon binding of the UvrA(2)B(2) complex to a putative damaged site, the DNA wraps around one UvrB monomer. DNA wrap is dependent on ATP binding by UvrB and probably causes local melting of the DNA helix, facilitating insertion of UvrB beta-hairpin between the DNA strands. Then UvrB probes one DNA strand for the presence of a lesion. If a lesion is found the UvrA subunits dissociate and the UvrB-DNA preincision complex is formed. This complex is subsequently bound by UvrC and the second UvrB is released. If no lesion is found, the DNA wraps around the other UvrB subunit that will check the other stand for damage. The chain is UvrABC system protein B from Pectobacterium atrosepticum (strain SCRI 1043 / ATCC BAA-672) (Erwinia carotovora subsp. atroseptica).